Consider the following 83-residue polypeptide: Bowman-Birk type seed trypsin and chymotrypsin inhibitor (83 aa).

7 cysteine pairs are disulfide-bonded: Cys-18-Cys-72, Cys-19-Cys-34, Cys-22-Cys-68, Cys-24-Cys-32, Cys-42-Cys-49, Cys-46-Cys-61, and Cys-51-Cys-59.

It belongs to the Bowman-Birk serine protease inhibitor family.

The sequence is that of Bowman-Birk type seed trypsin and chymotrypsin inhibitor from Vigna unguiculata (Cowpea).